The sequence spans 277 residues: Ribosomal protein L11 methyltransferase (277 aa).

The S-adenosyl-L-methionine site is built by threonine 130, glycine 151, aspartate 172, and asparagine 213.

It belongs to the methyltransferase superfamily. PrmA family.

The protein resides in the cytoplasm. It carries out the reaction L-lysyl-[protein] + 3 S-adenosyl-L-methionine = N(6),N(6),N(6)-trimethyl-L-lysyl-[protein] + 3 S-adenosyl-L-homocysteine + 3 H(+). Its function is as follows. Methylates ribosomal protein L11. In Campylobacter concisus (strain 13826), this protein is Ribosomal protein L11 methyltransferase.